Consider the following 180-residue polypeptide: Inner membrane-spanning protein YciB (180 aa).

A run of 6 helical transmembrane segments spans residues 4–24, 25–45, 52–72, 76–96, 118–138, and 150–170; these read LLSE…GGGI, QHAT…CYVI, LSII…ISGN, IKIK…MSGI, ITLS…NEVV, and FKVF…LPLL.

This sequence belongs to the YciB family.

Its subcellular location is the cell inner membrane. Functionally, plays a role in cell envelope biogenesis, maintenance of cell envelope integrity and membrane homeostasis. In Rickettsia massiliae (strain Mtu5), this protein is Inner membrane-spanning protein YciB.